The primary structure comprises 1055 residues: Sodium/potassium exporting P-type ATPase 1 (1055 aa).

Over 1–73 (MTPSIGYVDE…GADEKISISK (73 aa)) the chain is Cytoplasmic. Residues 74–94 (ILAHQIFNAMVLVLIISLIIA) form a helical membrane-spanning segment. Over 95 to 99 (LAIKD) the chain is Extracellular. Residues 100–120 (WISGGVIGFVVFINIFVGFIQ) form a helical membrane-spanning segment. Topologically, residues 121 to 298 (ELKAEKTMGS…TNVGTPLQRK (178 aa)) are cytoplasmic. Residues 299–319 (LSWLAILLFWVAVLFAIVVMA) form a helical membrane-spanning segment. At 320–328 (SQEMRVNRN) the chain is on the extracellular side. Residues 329–349 (VAIYAICVALSMIPSSLVVVL) traverse the membrane as a helical segment. The Cytoplasmic portion of the chain corresponds to 350–789 (TITMAIGAQV…RMSSNIQKFV (440 aa)). Aspartate 385 functions as the 4-aspartylphosphate intermediate in the catalytic mechanism. Residues aspartate 385 and threonine 387 each coordinate Mg(2+). Threonine 387, glutamate 491, lysine 544, arginine 586, threonine 646, glycine 647, aspartate 648, arginine 705, and lysine 711 together coordinate ATP. A Mg(2+)-binding site is contributed by aspartate 730. Asparagine 733 lines the ATP pocket. The chain crosses the membrane as a helical span at residues 790–810 (LQLLAENVAQALYLMIGLAFI). The Extracellular portion of the chain corresponds to 811 to 816 (DKSGYS). The helical transmembrane segment at 817 to 837 (VFPLSPVEVLWIIVVTSCFPA) threads the bilayer. Residues 838 to 866 (MGLGQEKASHDILEQPPNATIFTWEVIID) are Cytoplasmic-facing. The chain crosses the membrane as a helical span at residues 867–887 (MIAYGFWMAVCCLVCFVCIVY). Residues 888-913 (GKGDGSLGENCNEGSDTGCNLVFRGR) are Extracellular-facing. A helical transmembrane segment spans residues 914–934 (SGAFAAFTWCALLLAWECIHL). Residues 935–962 (RLSFFKMRPELENPWWKQLAIDLWDNQF) are Cytoplasmic-facing. The chain crosses the membrane as a helical span at residues 963-983 (LFWSVMGAIVSVFPVVYIPVI). The Extracellular segment spans residues 984 to 990 (NNKVFLH). The chain crosses the membrane as a helical span at residues 991–1011 (APIGYEWGLAVAFTILFLIGA). Residues 1012-1055 (EGWKWFKRVYYRKSNANNPEYDLERNDPFKEYSSFSKSNTMEIV) are Cytoplasmic-facing.

The protein belongs to the cation transport ATPase (P-type) (TC 3.A.3) family. Type IID subfamily. Requires Mg(2+) as cofactor. In terms of processing, the active site is phosphorylated in presence of sodium or potassium and in conditions of higher pH. Not phosphorylated in presence of calcium ions.

It is found in the cell membrane. The enzyme catalyses Na(+)(in) + ATP + H2O = Na(+)(out) + ADP + phosphate + H(+). The catalysed reaction is K(+)(in) + ATP + H2O = K(+)(out) + ADP + phosphate + H(+). Its function is as follows. Catalyzes the hydrolysis of ATP coupled with the export of sodium and potassium from the cell. May be an inefficient potassium exporter. May transport other cations such as lithium. Sodium/potassium efflux ATPases are involved in salt tolerance and maintaining the membrane potential across the plasma membrane in high salinity (Na+) or alkaline (K+) environments. The polypeptide is Sodium/potassium exporting P-type ATPase 1 (Schwanniomyces occidentalis (Yeast)).